The sequence spans 663 residues: 4-hydroxy-3-methylbut-2-en-1-yl diphosphate synthase (flavodoxin) (663 aa).

[4Fe-4S] cluster contacts are provided by Cys568, Cys571, Cys602, and Glu609.

The protein belongs to the IspG family. [4Fe-4S] cluster serves as cofactor.

It catalyses the reaction (2E)-4-hydroxy-3-methylbut-2-enyl diphosphate + oxidized [flavodoxin] + H2O + 2 H(+) = 2-C-methyl-D-erythritol 2,4-cyclic diphosphate + reduced [flavodoxin]. Its pathway is isoprenoid biosynthesis; isopentenyl diphosphate biosynthesis via DXP pathway; isopentenyl diphosphate from 1-deoxy-D-xylulose 5-phosphate: step 5/6. Functionally, converts 2C-methyl-D-erythritol 2,4-cyclodiphosphate (ME-2,4cPP) into 1-hydroxy-2-methyl-2-(E)-butenyl 4-diphosphate. This chain is 4-hydroxy-3-methylbut-2-en-1-yl diphosphate synthase (flavodoxin), found in Leptospira borgpetersenii serovar Hardjo-bovis (strain JB197).